The sequence spans 222 residues: Millepora cytotoxin-1 (222 aa).

The signal sequence occupies residues 1-20; that stretch reads MVTLYLHVPILLLVVITARA. The propeptide occupies 21-75; it reads APKPDTHNPFDELSSVAEKQDLHYGDRSRKDPFIAQNDVGNNFRDGTQENLTKVR. 3 disulfides stabilise this stretch: cysteine 89-cysteine 115, cysteine 142-cysteine 168, and cysteine 179-cysteine 222. 3 repeats span residues 100–109, 153–162, and 206–215; these read SIHDNHYEDR, SIHDNYYEDR, and SQHNNYYEDR.

Belongs to the dermatopontin family. In terms of processing, is not glycosylated.

It localises to the secreted. The protein resides in the nematocyst. Is potently cytotoxic (EC(50) value 79 ng/mL) towards L1210 mouse leukemia cells, has hemagglutination activity on sheep erythrocytes, and is lethal in crayfish. Has no phospholipase A2 activity. The sequence is that of Millepora cytotoxin-1 from Millepora dichotoma (Net fire coral).